The chain runs to 113 residues: Large ribosomal subunit protein P2 (113 aa).

Residues serine 60–tyrosine 113 are disordered. A compositionally biased stretch (low complexity) spans glycine 74–alanine 85. The segment covering glutamate 88–aspartate 99 has biased composition (acidic residues).

This sequence belongs to the eukaryotic ribosomal protein P1/P2 family. P1 and P2 exist as dimers at the large ribosomal subunit. Phosphorylated.

Functionally, plays an important role in the elongation step of protein synthesis. This chain is Large ribosomal subunit protein P2, found in Euplotes raikovi.